Consider the following 368-residue polypeptide: Phospho-N-acetylmuramoyl-pentapeptide-transferase (368 aa).

A run of 9 helical transmembrane segments spans residues 30-50 (AAAITALLITVFAGPSFIRFL), 72-92 (VPTMGGLLIILAVEISALLWA), 98-118 (HVWLIMLAVLWMGLIGFIDDY), 139-159 (VALGLVVGFYTWNDPAFSVLL), 170-190 (FSVDYGIFYIPVVIFIITAVS), 201-221 (GLAAGNAAIVTMALGLFAYLG), 238-258 (AGEIAVVSMAIVMACVGFLWF), 262-284 (PAEVFMGDTGSLALGSAIAVIAL), and 345-365 (KIVIRFWIISILLFLTSLMTL).

Belongs to the glycosyltransferase 4 family. MraY subfamily. Mg(2+) is required as a cofactor.

The protein resides in the cell inner membrane. It catalyses the reaction UDP-N-acetyl-alpha-D-muramoyl-L-alanyl-gamma-D-glutamyl-meso-2,6-diaminopimeloyl-D-alanyl-D-alanine + di-trans,octa-cis-undecaprenyl phosphate = di-trans,octa-cis-undecaprenyl diphospho-N-acetyl-alpha-D-muramoyl-L-alanyl-D-glutamyl-meso-2,6-diaminopimeloyl-D-alanyl-D-alanine + UMP. It functions in the pathway cell wall biogenesis; peptidoglycan biosynthesis. Its function is as follows. Catalyzes the initial step of the lipid cycle reactions in the biosynthesis of the cell wall peptidoglycan: transfers peptidoglycan precursor phospho-MurNAc-pentapeptide from UDP-MurNAc-pentapeptide onto the lipid carrier undecaprenyl phosphate, yielding undecaprenyl-pyrophosphoryl-MurNAc-pentapeptide, known as lipid I. The protein is Phospho-N-acetylmuramoyl-pentapeptide-transferase of Chlorobaculum parvum (strain DSM 263 / NCIMB 8327) (Chlorobium vibrioforme subsp. thiosulfatophilum).